A 508-amino-acid chain; its full sequence is Probable ligand-gated ion channel 46 (508 aa).

A signal peptide spans 1 to 18 (MQYLQFLSLVVLLLMCHA). Topologically, residues 19 to 274 (RKSVYRRNSP…FEFKRRAGWY (256 aa)) are extracellular. Residues asparagine 65, asparagine 134, asparagine 175, and asparagine 201 are each glycosylated (N-linked (GlcNAc...) asparagine). The cysteines at positions 190 and 204 are disulfide-linked. The helical transmembrane segment at 275 to 295 (ILQAYLPTYLTICISWISFAL) threads the bilayer. Residues 296–301 (GSKAIP) are Cytoplasmic-facing. A helical membrane pass occupies residues 302–321 (ARTMLGVNSLLAMTFQFGNI). The Extracellular portion of the chain corresponds to 322–335 (IRNLPRVSYVKAID). Residues 336–356 (VWMLSCMTFVFCSLLELAWVG) form a helical membrane-spanning segment. The Cytoplasmic segment spans residues 357 to 480 (YLSREEEPTS…KQRREILAHK (124 aa)). Residues 374–407 (AQVAPKPCHPPPVQQNANNSSVHRRQKQPKNEEE) are disordered. A helical membrane pass occupies residues 481–501 (IDSVSVFMFPFLFVLFNIAYW). At 502 to 508 (QHYLRGY) the chain is on the extracellular side.

The protein belongs to the ligand-gated ion channel (TC 1.A.9) family. As to expression, expressed in the nervous system, with high expression in cholinergic motor neurons and weak expression in GABAergic motor neurons.

It localises to the presynaptic cell membrane. The protein resides in the cell projection. It is found in the axon. The protein localises to the cytoplasmic vesicle. Its subcellular location is the secretory vesicle. It localises to the synaptic vesicle. In terms of biological role, probable component of a ligand-gated anion channel. Negatively regulates synaptic transmission and synaptic vesicle release in response to acetylcholine in cholinergic motor neurons. Role in synaptic vesicle release kinetics may be in association with the ligand-gated ion channel protein acc-4. In Caenorhabditis elegans, this protein is Probable ligand-gated ion channel 46.